The primary structure comprises 246 residues: 1-(5-phosphoribosyl)-5-[(5-phosphoribosylamino)methylideneamino] imidazole-4-carboxamide isomerase (246 aa).

Aspartate 8 acts as the Proton acceptor in catalysis. Residue aspartate 131 is the Proton donor of the active site.

The protein belongs to the HisA/HisF family.

The protein localises to the cytoplasm. The enzyme catalyses 1-(5-phospho-beta-D-ribosyl)-5-[(5-phospho-beta-D-ribosylamino)methylideneamino]imidazole-4-carboxamide = 5-[(5-phospho-1-deoxy-D-ribulos-1-ylimino)methylamino]-1-(5-phospho-beta-D-ribosyl)imidazole-4-carboxamide. It functions in the pathway amino-acid biosynthesis; L-histidine biosynthesis; L-histidine from 5-phospho-alpha-D-ribose 1-diphosphate: step 4/9. The protein is 1-(5-phosphoribosyl)-5-[(5-phosphoribosylamino)methylideneamino] imidazole-4-carboxamide isomerase of Polaromonas sp. (strain JS666 / ATCC BAA-500).